A 349-amino-acid chain; its full sequence is Neutral protease 2 homolog ACLA_052720 (349 aa).

The signal sequence occupies residues 1-19; the sequence is MQLTVLASAILALAQGALA. Residues 20–172 constitute a propeptide that is removed on maturation; sequence IPAKAPALDV…PAAINLLDRR (153 aa). 2 cysteine pairs are disulfide-bonded: cysteine 178/cysteine 250 and cysteine 257/cysteine 275. Zn(2+) is bound at residue histidine 300. Glutamate 301 is a catalytic residue. Zn(2+) is bound by residues histidine 304 and aspartate 315.

Belongs to the peptidase M35 family. Zn(2+) is required as a cofactor.

It localises to the secreted. The enzyme catalyses Preferential cleavage of bonds with hydrophobic residues in P1'. Also 3-Asn-|-Gln-4 and 8-Gly-|-Ser-9 bonds in insulin B chain.. Secreted metalloproteinase that allows assimilation of proteinaceous substrates. Shows high activities on basic nuclear substrates such as histone and protamine. The polypeptide is Neutral protease 2 homolog ACLA_052720 (Aspergillus clavatus (strain ATCC 1007 / CBS 513.65 / DSM 816 / NCTC 3887 / NRRL 1 / QM 1276 / 107)).